Reading from the N-terminus, the 125-residue chain is Small ribosomal subunit protein uS13 (125 aa).

A disordered region spans residues 97-125; the sequence is PVRGQKTRSNARTRKGPRPSRIKTKKKSS. A compositionally biased stretch (basic residues) spans 101–125; the sequence is QKTRSNARTRKGPRPSRIKTKKKSS.

This sequence belongs to the universal ribosomal protein uS13 family. As to quaternary structure, part of the 30S ribosomal subunit. Forms a loose heterodimer with protein S19. Forms two bridges to the 50S subunit in the 70S ribosome.

Located at the top of the head of the 30S subunit, it contacts several helices of the 16S rRNA. In the 70S ribosome it contacts the 23S rRNA (bridge B1a) and protein L5 of the 50S subunit (bridge B1b), connecting the 2 subunits; these bridges are implicated in subunit movement. Contacts the tRNAs in the A and P-sites. The sequence is that of Small ribosomal subunit protein uS13 from Thermotoga neapolitana (strain ATCC 49049 / DSM 4359 / NBRC 107923 / NS-E).